The sequence spans 207 residues: Small ribosomal subunit protein uS4 (207 aa).

The region spanning 96 to 159 (RRLDNVVYRL…RASTFIADNI (64 aa)) is the S4 RNA-binding domain.

The protein belongs to the universal ribosomal protein uS4 family. In terms of assembly, part of the 30S ribosomal subunit. Contacts protein S5. The interaction surface between S4 and S5 is involved in control of translational fidelity.

Its function is as follows. One of the primary rRNA binding proteins, it binds directly to 16S rRNA where it nucleates assembly of the body of the 30S subunit. In terms of biological role, with S5 and S12 plays an important role in translational accuracy. The polypeptide is Small ribosomal subunit protein uS4 (Leptospira borgpetersenii serovar Hardjo-bovis (strain JB197)).